A 495-amino-acid polypeptide reads, in one-letter code: Cobyric acid synthase (495 aa).

The 189-residue stretch at 256 to 444 folds into the GATase cobBQ-type domain; it reads KVNVAVVLLR…VHGILDNPSV (189 aa). C337 serves as the catalytic Nucleophile. H436 is a catalytic residue.

This sequence belongs to the CobB/CobQ family. CobQ subfamily.

Its pathway is cofactor biosynthesis; adenosylcobalamin biosynthesis. Functionally, catalyzes amidations at positions B, D, E, and G on adenosylcobyrinic A,C-diamide. NH(2) groups are provided by glutamine, and one molecule of ATP is hydrogenolyzed for each amidation. This chain is Cobyric acid synthase, found in Bacteroides fragilis (strain ATCC 25285 / DSM 2151 / CCUG 4856 / JCM 11019 / LMG 10263 / NCTC 9343 / Onslow / VPI 2553 / EN-2).